A 113-amino-acid chain; its full sequence is Ribulose bisphosphate carboxylase small subunit (113 aa).

It belongs to the RuBisCO small chain family. Heterohexadecamer of 8 large and 8 small subunits. RuBisCO interacts with the C-terminus of CcmM, and can be found in complexes that also include carbonic anhydrase (ccaA).

It localises to the carboxysome. In terms of biological role, ruBisCO catalyzes two reactions: the carboxylation of D-ribulose 1,5-bisphosphate, the primary event in carbon dioxide fixation, as well as the oxidative fragmentation of the pentose substrate in the photorespiration process. Both reactions occur simultaneously and in competition at the same active site. Although the small subunit is not catalytic it is essential for maximal activity. The sequence is that of Ribulose bisphosphate carboxylase small subunit from Synechocystis sp. (strain ATCC 27184 / PCC 6803 / Kazusa).